The primary structure comprises 313 residues: Protein-methionine-sulfoxide reductase catalytic subunit MsrP (313 aa).

The segment at residues Met1–Ala46 is a signal peptide (tat-type signal). Mo-molybdopterin-binding positions include Asn70, Tyr73–Glu74, Cys127, Thr162, Asn212, Arg217, and Gly228–Lys230.

The protein belongs to the MsrP family. As to quaternary structure, heterodimer of a catalytic subunit (MsrP) and a heme-binding subunit (MsrQ). Requires Mo-molybdopterin as cofactor. Predicted to be exported by the Tat system. The position of the signal peptide cleavage has not been experimentally proven.

It localises to the periplasm. The catalysed reaction is L-methionyl-[protein] + a quinone + H2O = L-methionyl-(S)-S-oxide-[protein] + a quinol. The enzyme catalyses L-methionyl-[protein] + a quinone + H2O = L-methionyl-(R)-S-oxide-[protein] + a quinol. Part of the MsrPQ system that repairs oxidized periplasmic proteins containing methionine sulfoxide residues (Met-O), using respiratory chain electrons. Thus protects these proteins from oxidative-stress damage caused by reactive species of oxygen and chlorine generated by the host defense mechanisms. MsrPQ is essential for the maintenance of envelope integrity under bleach stress, rescuing a wide series of structurally unrelated periplasmic proteins from methionine oxidation. The catalytic subunit MsrP is non-stereospecific, being able to reduce both (R-) and (S-) diastereoisomers of methionine sulfoxide. This Rhizobium meliloti (strain 1021) (Ensifer meliloti) protein is Protein-methionine-sulfoxide reductase catalytic subunit MsrP.